The primary structure comprises 434 residues: Innexin-14 (434 aa).

4 consecutive transmembrane segments (helical) span residues 30 to 50, 106 to 126, 301 to 321, and 365 to 385; these read LFTVYLLGFFVLLTGAKQHFG, WVPFFFAFQVCCFLLPFWCWA, IFIGLYFWLLVLTALSVIGTV, and YLCADGILLIYFMMDTNGFLK.

This sequence belongs to the pannexin family.

It localises to the cell membrane. The protein localises to the cell junction. The protein resides in the gap junction. Its function is as follows. Structural component of the gap junctions. This Caenorhabditis elegans protein is Innexin-14 (inx-14).